The following is a 596-amino-acid chain: Nitrite reductase (596 aa).

An N-terminal signal peptide occupies residues 1 to 29 (MRQRTPFARPGLLASAALALVLGPLAASA). The interval 30–76 (QEQVAPPKDPAAALEDHKTRTDNRYEPSLDNLAQQDVAAPGAPEGVS) is N-terminal tail. His-46 is a binding site for heme c. The heme d1 site is built by Tyr-54 and Ser-57. The Cytochrome c domain maps to 77–162 (ALSDAQYNEA…ANYLLLDPAA (86 aa)). The heme c site is built by Cys-94, Cys-97, His-98, Lys-108, and Tyr-122. The heme d1 site is built by Trp-138, Arg-203, His-229, Arg-232, Arg-245, Arg-272, Tyr-292, Arg-420, Gln-536, and Thr-583. The interval 163-596 (PPEFGMKEMR…NVYNTMTDTY (434 aa)) is D1-heme domain.

As to quaternary structure, homodimer. Heme c serves as cofactor. It depends on heme as a cofactor.

The protein resides in the periplasm. It carries out the reaction nitric oxide + Fe(III)-[cytochrome c] + H2O = Fe(II)-[cytochrome c] + nitrite + 2 H(+). It catalyses the reaction A + NH4(+) + H2O = hydroxylamine + AH2 + H(+). The polypeptide is Nitrite reductase (nirS) (Paracoccus pantotrophus (Thiosphaera pantotropha)).